The following is a 169-amino-acid chain: Cell division inhibitor SulA (169 aa).

Residues 1–13 (MFTSAHANRSAQA) show a composition bias toward polar residues. The interval 1 to 26 (MFTSAHANRSAQASAPAGHYAHRSGE) is disordered. The tract at residues 106 to 112 (ALRTGNY) is ftsZ binding. The lon protease binding stretch occupies residues 162-169 (KIHSNLYH).

This sequence belongs to the SulA family. As to quaternary structure, interacts with FtsZ. Post-translationally, is rapidly cleaved and degraded by the Lon protease once DNA damage is repaired.

Functionally, component of the SOS system and an inhibitor of cell division. Accumulation of SulA causes rapid cessation of cell division and the appearance of long, non-septate filaments. In the presence of GTP, binds a polymerization-competent form of FtsZ in a 1:1 ratio, thus inhibiting FtsZ polymerization and therefore preventing it from participating in the assembly of the Z ring. This mechanism prevents the premature segregation of damaged DNA to daughter cells during cell division. This is Cell division inhibitor SulA from Klebsiella pneumoniae subsp. pneumoniae (strain ATCC 700721 / MGH 78578).